The chain runs to 522 residues: ARS-binding protein 1 (522 aa).

Residues 70–144 (DVKRNRPPKY…RKRHILHAIN (75 aa)) enclose the HTH CENPB-type domain. Threonine 460 carries the post-translational modification Phosphothreonine.

As to quaternary structure, interacts with mcm10.

It localises to the nucleus. Functionally, binds, preferentially, to the Maundrell ARS consensus sequence within ARS3002. The sequence is that of ARS-binding protein 1 (abp1) from Schizosaccharomyces pombe (strain 972 / ATCC 24843) (Fission yeast).